An 84-amino-acid chain; its full sequence is Small ribosomal subunit protein bS16 (84 aa).

The protein belongs to the bacterial ribosomal protein bS16 family.

This is Small ribosomal subunit protein bS16 from Acaryochloris marina (strain MBIC 11017).